Reading from the N-terminus, the 263-residue chain is Metaxin-2 (263 aa).

Ser2 carries the N-acetylserine modification.

This sequence belongs to the metaxin family. In terms of assembly, interacts with MTX1/metaxin-1. Associates with the mitochondrial contact site and cristae organizing system (MICOS) complex, composed of at least MICOS10/MIC10, CHCHD3/MIC19, CHCHD6/MIC25, APOOL/MIC27, IMMT/MIC60, APOO/MIC23/MIC26 and QIL1/MIC13. This complex was also known under the names MINOS or MitOS complex. The MICOS complex associates with mitochondrial outer membrane proteins SAMM50, MTX1 and MTX2 (together described as components of the mitochondrial outer membrane sorting assembly machinery (SAM) complex) and DNAJC11, mitochondrial inner membrane protein TMEM11 and with HSPA9. The MICOS and SAM complexes together with DNAJC11 are part of a large protein complex spanning both membranes termed the mitochondrial intermembrane space bridging (MIB) complex.

It localises to the mitochondrion outer membrane. The protein resides in the mitochondrion. Its function is as follows. Involved in transport of proteins into the mitochondrion. The protein is Metaxin-2 (Mtx2) of Mus musculus (Mouse).